The chain runs to 147 residues: MSQNLDFLALAGRGGPHYASPTSRHPSPKVWNSTPPSLERGPSERQISPTPDQYTNPNRRRQPWKDWSPGRWQLLQNQRQSWGLSPTAPTRHKRTPEPKPFFRQPRGGATQVYGNHQPGSYRDISHYYSPSMLEDPWAALQAEAQYR.

The tract at residues 1 to 119 (MSQNLDFLAL…TQVYGNHQPG (119 aa)) is disordered. Composition is skewed to polar residues over residues 20–36 (SPTS…STPP), 45–57 (RQIS…YTNP), and 74–88 (LLQN…SPTA).

The chain is Gastrula-specific protein 17 (gs17) from Xenopus laevis (African clawed frog).